Consider the following 262-residue polypeptide: Tryptophan synthase alpha chain (262 aa).

Active-site proton acceptor residues include E49 and D60.

It belongs to the TrpA family. As to quaternary structure, tetramer of two alpha and two beta chains.

The catalysed reaction is (1S,2R)-1-C-(indol-3-yl)glycerol 3-phosphate + L-serine = D-glyceraldehyde 3-phosphate + L-tryptophan + H2O. The protein operates within amino-acid biosynthesis; L-tryptophan biosynthesis; L-tryptophan from chorismate: step 5/5. The alpha subunit is responsible for the aldol cleavage of indoleglycerol phosphate to indole and glyceraldehyde 3-phosphate. The polypeptide is Tryptophan synthase alpha chain (Caldanaerobacter subterraneus subsp. tengcongensis (strain DSM 15242 / JCM 11007 / NBRC 100824 / MB4) (Thermoanaerobacter tengcongensis)).